We begin with the raw amino-acid sequence, 87 residues long: Small ribosomal subunit protein uS17 (87 aa).

This sequence belongs to the universal ribosomal protein uS17 family. Part of the 30S ribosomal subunit.

Functionally, one of the primary rRNA binding proteins, it binds specifically to the 5'-end of 16S ribosomal RNA. The polypeptide is Small ribosomal subunit protein uS17 (Geobacillus stearothermophilus (Bacillus stearothermophilus)).